An 857-amino-acid polypeptide reads, in one-letter code: Putative serine/threonine-protein kinase receptor (857 aa).

An N-terminal signal peptide occupies residues 1 to 32 (MKGARNIYHHSYMSFLLVFVVMILIHPALSIY). The Extracellular segment spans residues 33–446 (INTLSSTESL…IAKKRNASGK (414 aa)). Residues 35-155 (TLSSTESLTI…SNNDASEYLW (121 aa)) enclose the Bulb-type lectin domain. Residues asparagine 47, asparagine 120, asparagine 196, asparagine 260, asparagine 389, and asparagine 442 are each glycosylated (N-linked (GlcNAc...) asparagine). A PAN domain is found at 350 to 433 (CSGDGFTRMK…DGQDLYVRLA (84 aa)). Disulfide bonds link cysteine 380–cysteine 405 and cysteine 388–cysteine 390. The chain crosses the membrane as a helical span at residues 447–466 (IISLTVGVSVLLLLIMFCLW). Residues 467–857 (KRKQKRAKAS…QYTCSVIDAR (391 aa)) lie on the Cytoplasmic side of the membrane. The Protein kinase domain maps to 528 to 779 (FSSCNKLGQG…PSIFQPQEVL (252 aa)). Residues 534 to 542 (LGQGGFGIV) and lysine 556 contribute to the ATP site. Aspartate 653 functions as the Proton acceptor in the catalytic mechanism.

It belongs to the protein kinase superfamily. Ser/Thr protein kinase family. Predominantly in the pistil and anther.

It is found in the membrane. It carries out the reaction L-seryl-[protein] + ATP = O-phospho-L-seryl-[protein] + ADP + H(+). The catalysed reaction is L-threonyl-[protein] + ATP = O-phospho-L-threonyl-[protein] + ADP + H(+). Involved in sporophytic self-incompatibility system (the inability of flowering plants to achieve self-fertilization), probably acting in combination with S-locus-specific glycoproteins. Interaction with a ligand in the extracellular domain triggers the protein kinase activity of the cytoplasmic domain. The sequence is that of Putative serine/threonine-protein kinase receptor (SRK6) from Brassica oleracea var. viridis (Flowering kale).